Reading from the N-terminus, the 204-residue chain is Methylthioribulose-1-phosphate dehydratase (204 aa).

Histidine 94 and histidine 96 together coordinate Zn(2+).

It belongs to the aldolase class II family. MtnB subfamily. Zn(2+) is required as a cofactor.

It catalyses the reaction 5-(methylsulfanyl)-D-ribulose 1-phosphate = 5-methylsulfanyl-2,3-dioxopentyl phosphate + H2O. It functions in the pathway amino-acid biosynthesis; L-methionine biosynthesis via salvage pathway; L-methionine from S-methyl-5-thio-alpha-D-ribose 1-phosphate: step 2/6. Its function is as follows. Catalyzes the dehydration of methylthioribulose-1-phosphate (MTRu-1-P) into 2,3-diketo-5-methylthiopentyl-1-phosphate (DK-MTP-1-P). The chain is Methylthioribulose-1-phosphate dehydratase from Serratia proteamaculans (strain 568).